Reading from the N-terminus, the 238-residue chain is Purine nucleoside phosphorylase DeoD-type (238 aa).

His-4 provides a ligand contact to a purine D-ribonucleoside. Residues Gly-20, Arg-24, Arg-43, and 87–90 (RVGT) each bind phosphate. A purine D-ribonucleoside-binding positions include 179 to 181 (EME) and 203 to 204 (SN).

It belongs to the PNP/UDP phosphorylase family. As to quaternary structure, homohexamer; trimer of homodimers.

The catalysed reaction is a purine D-ribonucleoside + phosphate = a purine nucleobase + alpha-D-ribose 1-phosphate. The enzyme catalyses a purine 2'-deoxy-D-ribonucleoside + phosphate = a purine nucleobase + 2-deoxy-alpha-D-ribose 1-phosphate. In terms of biological role, catalyzes the reversible phosphorolytic breakdown of the N-glycosidic bond in the beta-(deoxy)ribonucleoside molecules, with the formation of the corresponding free purine bases and pentose-1-phosphate. The sequence is that of Purine nucleoside phosphorylase DeoD-type from Lacticaseibacillus casei (strain BL23) (Lactobacillus casei).